The sequence spans 732 residues: Prolyl tripeptidyl peptidase (732 aa).

The first 24 residues, 1–24, serve as a signal peptide directing secretion; it reads MKKTIFQQLFLSVCALTVALPCSA. Catalysis depends on charge relay system residues Ser-603, Asp-678, and His-710.

Belongs to the peptidase S9B family.

It carries out the reaction Hydrolysis of Xaa-Xaa-Pro-|-Yaa- releasing the N-terminal tripeptide of a peptide with Pro as the third residue (position P1) and where Yaa is not proline.. In terms of biological role, serine proteinase. Releases tripeptides from the free amino terminus of proteins. Has a requirement for Pro in the P1 position, but is inactivated by Pro in the P1' position. This Porphyromonas gingivalis (strain ATCC 33277 / DSM 20709 / CIP 103683 / JCM 12257 / NCTC 11834 / 2561) protein is Prolyl tripeptidyl peptidase.